Reading from the N-terminus, the 477-residue chain is MISLDLSPTLWKSPDKEGELKKQGHVVKNWKKRKFIIQNDMLFYFKDKEERPVGAVPLRMSRCYENKSLGKPNCFELVSPRINKTFFIQANTPDEMASWMKAVEKGSEYSTVSQPFNLKHEVHVDFNSATGFSGLPKEWEVILKSSNVSKQEVLDKPSEWLSVLEFQAGRTMEKSNSQNLSALPDESNLTLSDLVTKEDPTKIYKNMTKIGEGAAGEVFVATSSKNNKRVAIKKIEINNDNAKLLVTEIAIMKTSHHDNIVNYIDSYIVNDRELWVAMEFMGGGCLTDILEAFDNIKMSEIQIAYVVKETLKALQYIHSLHRIHRDIKSDNILLGSEGSVKIADFGYAAQLTQKQQKRNTVVGTPYWMAPELIRGHDYGVKVDIWSLGIMMMEMAEGEPPYMDFPPLRALFLITTKGIPPLKETTKWSKTFQDFFSKCLDINVANRPDATDLLKHPFMDLACDSSEFKPLIQAARNV.

In terms of domain architecture, PH spans 13–108 (SPDKEGELKK…WMKAVEKGSE (96 aa)). One can recognise a CRIB domain in the interval 112 to 125 (VSQPFNLKHEVHVD). Positions 204–458 (YKNMTKIGEG…ATDLLKHPFM (255 aa)) constitute a Protein kinase domain. ATP-binding positions include 210–218 (IGEGAAGEV) and K233. Catalysis depends on D326, which acts as the Proton acceptor.

Belongs to the protein kinase superfamily. STE Ser/Thr protein kinase family. STE20 subfamily. In terms of assembly, interacts with GTP-bound racB. The cofactor is Mg(2+).

The protein resides in the cytoplasm. Its subcellular location is the membrane. The catalysed reaction is L-seryl-[protein] + ATP = O-phospho-L-seryl-[protein] + ADP + H(+). The enzyme catalyses L-threonyl-[protein] + ATP = O-phospho-L-threonyl-[protein] + ADP + H(+). With respect to regulation, kinase activity is rapidly and transiently increased in response to chemoattractant stimulation. In terms of biological role, has role in the regulation of chemotaxis. The chain is Serine/threonine-protein kinase pakC (pakC) from Dictyostelium discoideum (Social amoeba).